The sequence spans 364 residues: Geissoschizine synthase (364 aa).

Zn(2+) is bound at residue Cys51. Asn52 serves as a coordination point for NADP(+). Residues His73, Glu74, Cys104, Cys107, Cys110, Cys118, and Cys168 each contribute to the Zn(2+) site. NADP(+) contacts are provided by Leu194, Gly196, Leu197, Ser216, Thr217, Ser218, Lys221, Arg261, Val280, Ala282, Ser304, Thr306, and Arg351.

Belongs to the zinc-containing alcohol dehydrogenase family. Class-III subfamily. In terms of assembly, homodimer. Zn(2+) is required as a cofactor. In terms of tissue distribution, expressed in leaf epidermis.

The enzyme catalyses (19E)-geissoschizine + NADP(+) = 4,21-dehydrogeissoschizine + NADPH. It participates in alkaloid biosynthesis. Its function is as follows. Component of the seco-iridoid and derivatives monoterpenoid indole alkaloids (MIAs, e.g. catharanthine, tabersonine, vincadifformine, vindoline, vincristine, quinine and strychnine) biosynthesis pathway. During the conversion of strictosidine aglycone to geissoschizine, catalyzes iminium reduction on 4,21-dehydrogeissoschizine to produce 19E-geissoschizine, precursor of catharanthine and tabersonine derivatives. May also trigger the production of reactive intermediate used by the HL1, HL2, HL3 and HL4 to form catharanthine, vincadifformine and tabersonine. The chain is Geissoschizine synthase from Catharanthus roseus (Madagascar periwinkle).